Reading from the N-terminus, the 168-residue chain is Ribonuclease H (168 aa).

An RNase H type-1 domain is found at 10-151 (NNIPVKIYTD…ADKLATNGKI (142 aa)). The Mg(2+) site is built by aspartate 19, glutamate 57, aspartate 79, and aspartate 143.

This sequence belongs to the RNase H family. In terms of assembly, monomer. Requires Mg(2+) as cofactor.

The protein resides in the cytoplasm. It carries out the reaction Endonucleolytic cleavage to 5'-phosphomonoester.. Endonuclease that specifically degrades the RNA of RNA-DNA hybrids. The polypeptide is Ribonuclease H (Orientia tsutsugamushi (strain Boryong) (Rickettsia tsutsugamushi)).